A 648-amino-acid polypeptide reads, in one-letter code: Leucine-rich repeat transmembrane protein FLRT3 (648 aa).

Residues methionine 1 to alanine 28 form the signal peptide. The Extracellular portion of the chain corresponds to lysine 29–proline 527. Residues proline 30–threonine 62 form the LRRNT domain. Intrachain disulfides connect cysteine 31/cysteine 37 and cysteine 35/cysteine 44. 10 LRR repeats span residues aspartate 58–leucine 82, aspartate 83–asparagine 105, lysine 107–glutamine 126, isoleucine 127–aspartate 152, isoleucine 154–glutamate 179, arginine 181–aspartate 197, leucine 198–asparagine 223, isoleucine 225–glycine 246, threonine 247–aspartate 269, and leucine 270–aspartate 293. Residue asparagine 226 is glycosylated (N-linked (GlcNAc...) asparagine). The 52-residue stretch at asparagine 305 to lysine 356 folds into the LRRCT domain. Cysteine 309 and cysteine 334 form a disulfide bridge. Positions lysine 409 to leucine 503 constitute a Fibronectin type-III domain. The helical transmembrane segment at leucine 528 to cysteine 548 threads the bilayer. Over tryptophan 549–serine 648 the chain is Cytoplasmic. The span at asparagine 624–arginine 633 shows a compositional bias: low complexity. The disordered stretch occupies residues asparagine 624–serine 648.

Interacts with fgfr1 and fgfr4. Interacts with rnd1, cdh1 and pcdh8. Interacts (via extracellular domain) with unc5b and unc5d (via extracellular domain). In terms of processing, N-glycosylated. Post-translationally, proteolytic cleavage in the juxtamembrane region gives rise to a soluble ectodomain. Cleavage is probably effected by a metalloprotease.

Its subcellular location is the cell membrane. It is found in the endoplasmic reticulum membrane. The protein resides in the cell junction. The protein localises to the focal adhesion. It localises to the secreted. Its subcellular location is the cell projection. It is found in the axon. The protein resides in the growth cone membrane. Functions in cell-cell adhesion, cell migration and axon guidance, exerting an attractive or repulsive role depending on its interaction partners. Modulates cadherin-dependent cell-cell adhesion and cell sorting. Plays a role in the spatial organization of brain neurons. Plays a role in vascular development. Plays a role in cell-cell adhesion via its interaction with latrophilins that are expressed at the surface of adjacent cells. Mediates axon attraction towards cells expressing ntn1. mediates axon growth cone collapse and plays a repulsive role in neuron guidance via its interaction with unc-5 family members. Plays a role in the regulation of the density of glutamaergic synapses. Plays a role in signaling cascades downstream of fgfr1, and possibly also other fgfr family members. Plays a role in embryonic morphogenesis, but not in embryonic patterning. The chain is Leucine-rich repeat transmembrane protein FLRT3 from Xenopus tropicalis (Western clawed frog).